The primary structure comprises 82 residues: Small ribosomal subunit protein uS17 (82 aa).

Belongs to the universal ribosomal protein uS17 family. In terms of assembly, part of the 30S ribosomal subunit.

Functionally, one of the primary rRNA binding proteins, it binds specifically to the 5'-end of 16S ribosomal RNA. The chain is Small ribosomal subunit protein uS17 from Paracoccus denitrificans (strain Pd 1222).